The sequence spans 157 residues: S-ribosylhomocysteine lyase (157 aa).

The Fe cation site is built by histidine 54, histidine 58, and cysteine 126.

It belongs to the LuxS family. Homodimer. Fe cation is required as a cofactor.

The catalysed reaction is S-(5-deoxy-D-ribos-5-yl)-L-homocysteine = (S)-4,5-dihydroxypentane-2,3-dione + L-homocysteine. Its function is as follows. Involved in the synthesis of autoinducer 2 (AI-2) which is secreted by bacteria and is used to communicate both the cell density and the metabolic potential of the environment. The regulation of gene expression in response to changes in cell density is called quorum sensing. Catalyzes the transformation of S-ribosylhomocysteine (RHC) to homocysteine (HC) and 4,5-dihydroxy-2,3-pentadione (DPD). This is S-ribosylhomocysteine lyase from Bacillus licheniformis (strain ATCC 14580 / DSM 13 / JCM 2505 / CCUG 7422 / NBRC 12200 / NCIMB 9375 / NCTC 10341 / NRRL NRS-1264 / Gibson 46).